Here is a 411-residue protein sequence, read N- to C-terminus: UPF0761 membrane protein PA14_51960 (411 aa).

6 helical membrane passes run 36 to 56, 92 to 112, 132 to 152, 174 to 194, 207 to 229, and 244 to 264; these read LFAV…IPAF, HLTW…LVTI, FLLY…GFAV, LLGL…YSAV, GGVF…VSLF, and IFLL…VLVC.

Belongs to the UPF0761 family.

It is found in the cell inner membrane. This chain is UPF0761 membrane protein PA14_51960, found in Pseudomonas aeruginosa (strain UCBPP-PA14).